The chain runs to 234 residues: Large ribosomal subunit protein uL1 (234 aa).

This sequence belongs to the universal ribosomal protein uL1 family. Part of the 50S ribosomal subunit.

Functionally, binds directly to 23S rRNA. The L1 stalk is quite mobile in the ribosome, and is involved in E site tRNA release. Protein L1 is also a translational repressor protein, it controls the translation of the L11 operon by binding to its mRNA. This chain is Large ribosomal subunit protein uL1, found in Desulfatibacillum aliphaticivorans.